Reading from the N-terminus, the 85-residue chain is Large ribosomal subunit protein bL27 (85 aa).

Residues 1–20 form a disordered region; it reads MAHKKAAGSTRNGRDSEAKR.

It belongs to the bacterial ribosomal protein bL27 family.

This is Large ribosomal subunit protein bL27 from Colwellia psychrerythraea (strain 34H / ATCC BAA-681) (Vibrio psychroerythus).